The chain runs to 404 residues: Cysteine desulfurase IscS (404 aa).

Residues 75 to 76 (AT), asparagine 155, glutamine 183, and 203 to 205 (SGH) contribute to the pyridoxal 5'-phosphate site. Lysine 206 carries the N6-(pyridoxal phosphate)lysine modification. Threonine 243 lines the pyridoxal 5'-phosphate pocket. Cysteine 328 functions as the Cysteine persulfide intermediate in the catalytic mechanism. Cysteine 328 contacts [2Fe-2S] cluster.

The protein belongs to the class-V pyridoxal-phosphate-dependent aminotransferase family. NifS/IscS subfamily. Homodimer. Forms a heterotetramer with IscU, interacts with other sulfur acceptors. It depends on pyridoxal 5'-phosphate as a cofactor.

It is found in the cytoplasm. The catalysed reaction is (sulfur carrier)-H + L-cysteine = (sulfur carrier)-SH + L-alanine. The protein operates within cofactor biosynthesis; iron-sulfur cluster biosynthesis. Master enzyme that delivers sulfur to a number of partners involved in Fe-S cluster assembly, tRNA modification or cofactor biosynthesis. Catalyzes the removal of elemental sulfur atoms from cysteine to produce alanine. Functions as a sulfur delivery protein for Fe-S cluster synthesis onto IscU, an Fe-S scaffold assembly protein, as well as other S acceptor proteins. This chain is Cysteine desulfurase IscS, found in Actinobacillus succinogenes (strain ATCC 55618 / DSM 22257 / CCUG 43843 / 130Z).